We begin with the raw amino-acid sequence, 250 residues long: 5-oxoprolinase subunit A (250 aa).

Belongs to the LamB/PxpA family. In terms of assembly, forms a complex composed of PxpA, PxpB and PxpC.

The enzyme catalyses 5-oxo-L-proline + ATP + 2 H2O = L-glutamate + ADP + phosphate + H(+). Functionally, catalyzes the cleavage of 5-oxoproline to form L-glutamate coupled to the hydrolysis of ATP to ADP and inorganic phosphate. The sequence is that of 5-oxoprolinase subunit A from Nocardia farcinica (strain IFM 10152).